A 34-amino-acid chain; its full sequence is Photosystem II reaction center protein Psb30 (34 aa).

The chain crosses the membrane as a helical span at residues 6–26; the sequence is VIAQLVSLGVIVLVGPAVIIL.

The protein belongs to the Psb30/Ycf12 family. In terms of assembly, PSII is composed of 1 copy each of membrane proteins PsbA, PsbB, PsbC, PsbD, PsbE, PsbF, PsbH, PsbI, PsbJ, PsbK, PsbL, PsbM, PsbT, PsbX, PsbY, PsbZ, Psb30/Ycf12, peripheral proteins of the oxygen-evolving complex and a large number of cofactors. It forms dimeric complexes.

Its subcellular location is the plastid. The protein resides in the chloroplast thylakoid membrane. In terms of biological role, a core subunit of photosystem II (PSII), probably helps stabilize the reaction center. The chain is Photosystem II reaction center protein Psb30 from Pyropia yezoensis (Susabi-nori).